A 530-amino-acid polypeptide reads, in one-letter code: Ataxin-10 homolog (530 aa).

The protein belongs to the ataxin-10 family.

Its subcellular location is the cytoplasm. In terms of biological role, may play a role in the regulation of cytokinesis. The protein is Ataxin-10 homolog (CTR86) of Candida glabrata (strain ATCC 2001 / BCRC 20586 / JCM 3761 / NBRC 0622 / NRRL Y-65 / CBS 138) (Yeast).